Consider the following 56-residue polypeptide: Small ribosomal subunit protein uS14 (56 aa).

4 residues coordinate Zn(2+): Cys21, Cys24, Cys39, and Cys42.

It belongs to the universal ribosomal protein uS14 family. Zn(2+) is required as a cofactor.

The protein is Small ribosomal subunit protein uS14 (RPS29) of Debaryomyces hansenii (strain ATCC 36239 / CBS 767 / BCRC 21394 / JCM 1990 / NBRC 0083 / IGC 2968) (Yeast).